The sequence spans 81 residues: Omega-conotoxin-like Vc6.4 (81 aa).

The N-terminal stretch at 1–22 (MKLTCVMIVAVLFLTANTFVTA) is a signal peptide. Residues 23–51 (VPHSSNVLENLYLKARHEMENPEASKLNT) constitute a propeptide that is removed on maturation. Cystine bridges form between Cys-55–Cys-72, Cys-62–Cys-76, and Cys-71–Cys-80.

Belongs to the conotoxin O1 superfamily. In terms of tissue distribution, expressed by the venom duct.

The protein localises to the secreted. Omega-conotoxins act at presynaptic membranes, they bind and block voltage-gated calcium channels. Act on high voltage-activated (HVA) calcium currents in molluscan neurons. The polypeptide is Omega-conotoxin-like Vc6.4 (Conus victoriae (Queen Victoria cone)).